The sequence spans 500 residues: Cysteine-rich secretory protein LCCL domain-containing 1 (500 aa).

An N-terminal signal peptide occupies residues 1–23; it reads MMCKAQEWLRVTALLFVARAVPA. Residues 66-206 enclose the SCP domain; sequence LDLHNKLRSQ…PKAVYLVCNY (141 aa). Residues 258–281 are disordered; sequence EIERQQSQVHDTHVRTRSDDSDRN. 2 consecutive LCCL domains span residues 289 to 384 and 390 to 492; these read MSQI…ANSF and TVQA…TGGK. Intrachain disulfides connect Cys-295–Cys-313, Cys-317–Cys-337, Cys-396–Cys-418, and Cys-422–Cys-445.

Belongs to the CRISP family.

The protein resides in the secreted. This is Cysteine-rich secretory protein LCCL domain-containing 1 (Crispld1) from Mus musculus (Mouse).